A 225-amino-acid chain; its full sequence is Putative amino-acid transporter YggA (225 aa).

5 helical membrane-spanning segments follow: residues 1 to 21 (MFAT…PIGA), 37 to 57 (LLTA…GVFG), 65 to 85 (SPIG…WFGI), 116 to 136 (LGVT…LGSF), and 150 to 170 (AVAM…AVVL).

This sequence belongs to the LysE/ArgO transporter (TC 2.A.75) family.

It is found in the cell membrane. In Aeromonas hydrophila, this protein is Putative amino-acid transporter YggA.